A 246-amino-acid chain; its full sequence is Proteolipid protein DM gamma (246 aa).

The next 4 membrane-spanning stretches (helical) occupy residues 19-35, 71-87, 118-134, and 206-222; these read LLAT…FCGC, VIYG…IILL, VFLT…VFGF, and FIVA…ALLI.

The protein belongs to the myelin proteolipid protein family. In terms of tissue distribution, highly expressed in white matter in myelinating shark brain.

It is found in the membrane. The chain is Proteolipid protein DM gamma from Squalus acanthias (Spiny dogfish).